The chain runs to 159 residues: Endoribonuclease YbeY (159 aa).

The Zn(2+) site is built by His-119, His-123, and His-129.

This sequence belongs to the endoribonuclease YbeY family. Zn(2+) is required as a cofactor.

It is found in the cytoplasm. Single strand-specific metallo-endoribonuclease involved in late-stage 70S ribosome quality control and in maturation of the 3' terminus of the 16S rRNA. The polypeptide is Endoribonuclease YbeY (Acinetobacter baylyi (strain ATCC 33305 / BD413 / ADP1)).